The chain runs to 363 residues: 3-ketodihydrosphingosine reductase TSC10 (363 aa).

Residue Leu10 coordinates NADP(+). Gly13, Ser15, and Gly17 together coordinate NADPH. Residues Gly13–Gly17 carry the GXSXG motif. An NADP(+)-binding site is contributed by Leu18. Arg40, Lys44, Asp131, and Leu132 together coordinate NADPH. Residue Asp131 participates in NADP(+) binding. Ser206 (proton donor) is an active-site residue. The NADP(+) site is built by Tyr220, Lys224, and Ser253. Tyr220 acts as the Proton acceptor in catalysis. The Lowers pKa of active site Tyr role is filled by Lys224. Residues Phe324–Leu344 traverse the membrane as a helical segment.

Belongs to the short-chain dehydrogenases/reductases (SDR) family.

It is found in the endoplasmic reticulum membrane. The enzyme catalyses sphinganine + NADP(+) = 3-oxosphinganine + NADPH + H(+). The protein operates within lipid metabolism; sphingolipid metabolism. In terms of biological role, catalyzes the reduction of 3'-oxosphinganine (3-ketodihydrosphingosine/KDS) to sphinganine (dihydrosphingosine/DHS), the second step of de novo sphingolipid biosynthesis. The sequence is that of 3-ketodihydrosphingosine reductase TSC10 (TSC10) from Candida glabrata (strain ATCC 2001 / BCRC 20586 / JCM 3761 / NBRC 0622 / NRRL Y-65 / CBS 138) (Yeast).